A 369-amino-acid chain; its full sequence is CCA-adding enzyme (369 aa).

2 residues coordinate ATP: Gly-8 and Arg-11. The CTP site is built by Gly-8 and Arg-11. Mg(2+) contacts are provided by Asp-21 and Asp-23. 3 residues coordinate ATP: Arg-91, Arg-137, and Arg-140. CTP-binding residues include Arg-91, Arg-137, and Arg-140.

It belongs to the tRNA nucleotidyltransferase/poly(A) polymerase family. Bacterial CCA-adding enzyme type 2 subfamily. Mg(2+) is required as a cofactor.

The catalysed reaction is a tRNA precursor + 2 CTP + ATP = a tRNA with a 3' CCA end + 3 diphosphate. The enzyme catalyses a tRNA with a 3' CCA end + 2 CTP + ATP = a tRNA with a 3' CCACCA end + 3 diphosphate. In terms of biological role, catalyzes the addition and repair of the essential 3'-terminal CCA sequence in tRNAs without using a nucleic acid template. Adds these three nucleotides in the order of C, C, and A to the tRNA nucleotide-73, using CTP and ATP as substrates and producing inorganic pyrophosphate. tRNA 3'-terminal CCA addition is required both for tRNA processing and repair. Also involved in tRNA surveillance by mediating tandem CCA addition to generate a CCACCA at the 3' terminus of unstable tRNAs. While stable tRNAs receive only 3'-terminal CCA, unstable tRNAs are marked with CCACCA and rapidly degraded. The polypeptide is CCA-adding enzyme (Francisella tularensis subsp. novicida (strain U112)).